The following is a 1029-amino-acid chain: MISIYGLVMALMMASVLASSSRFQRVPQSQSVVENESVKFECESTDSYSELHYDWLHNAHRIAYDKRVHQIGSNLHIEAVRRTEDVGNYVCIATNLASGAREASPPAKLSVIYLESASVQLLGSNRNELLLKCHVEGASGDLEPLEIEWYRNSEKLSTWKNVQLDQHRLIIRQPGSEDDGLYRCTASNAAGRVMSKQGYVYQSSVKCLPRLPRRKNQKMMESWDKQTFLCRGKRGGAAGLESLPAAPEDLRIVQGPVGQSIIKEGEPTALTCLYELPDELKNQRIQLRWRKDGKLLRQVELGGSAPIIGHSFDSGKDALLREDARLVLHKQNGTLSFASIIASDAGQYQCQLQLEAHAPISSSPGILEVIEQLKFVPQPTSKNLELDAVVAKVHCKAQGTPTPQVQWIRDGENTTLPDQVEVDANGTLIFRNVNSEHRGNYTCLATNTQGQINATVAINVVVTPKFSVPPVGPIETSEQGTAVMHCQAIGDPKPTIQWDKDLKYLSENNTDRERFRFLENGTLEIRNVQVEDEGSYGCTIGNSAGLKREDVQLVVKTTGDGFAPEESGGDGFLVTRAVLITMTVALAYIVLVVGLMLWCRYRRQARKARLNDLSTKEAGGEQPDAAGNGKGSEQEPCLSKQHNGHSKSRSKSSGDAQKSDDTACSQQSRASKKSAHIYEQLALPRSGLSELIQIGRGEFGDVFVGKLKATLVTSPSDKDADTEKQHSNSENGSGGSGSGSTTLSTLNEKRRSKTSMDDIEEIKEEEQEQHNQSGLDQLVLVKALNKVKDEQACQEFRRQLDLLRAISHKGVVRLFGLCREKDPHYMVLEYTDWGDLKQFLLATAGKVNTATAGSSSPPPLTTSQVLAVAYQIARGMDAIYRARFTHRDLATRNCVISSEFIVKVSYPALCKDKYSREYHKHRNTLLPIRWLAPECIQEDEYTTKSDIFAYGVVVWELFNQATKLPHEELTNEQVVQRSQAGSLEWSVAEATPDSLREILLSCWVSNPKERPSFSQLGAALSKAMQIAEK.

Residues 1-18 form the signal peptide; sequence MISIYGLVMALMMASVLA. Residues 19–577 are Extracellular-facing; sequence SSSRFQRVPQ…GGDGFLVTRA (559 aa). Ig-like C2-type domains are found at residues 21-104, 105-195, 247-361, 364-459, and 464-554; these read SRFQ…REAS, PPAK…RVMS, PEDL…APIS, PGIL…VAIN, and PKFS…VQLV. N35 is a glycosylation site (N-linked (GlcNAc...) asparagine). Cystine bridges form between C42/C91, C133/C184, C272/C350, and C395/C443. N-linked (GlcNAc...) asparagine glycans are attached at residues N332, N413, N425, N440, N453, N508, and N520. A disulfide bridge connects residues C486 and C538. A helical transmembrane segment spans residues 578–598; the sequence is VLITMTVALAYIVLVVGLMLW. The Cytoplasmic segment spans residues 599–1029; the sequence is CRYRRQARKA…LSKAMQIAEK (431 aa). Disordered regions lie at residues 613–675 and 714–756; these read LSTK…KKSA and SPSD…KTSM. Positions 651–669 are enriched in polar residues; it reads KSSGDAQKSDDTACSQQSR. The residue at position 674 (S674) is a Phosphoserine. Residues 688 to 1024 form the Protein kinase; inactive domain; it reads LSELIQIGRG…QLGAALSKAM (337 aa). Basic and acidic residues predominate over residues 716–727; that stretch reads SDKDADTEKQHS.

It belongs to the protein kinase superfamily. Tyr protein kinase family. Insulin receptor subfamily. Interacts with plexA; component of a receptor complex that mediates the repulsive signaling in response to Semaphorin ligands.

It localises to the cell membrane. Its function is as follows. Acts as a calcium-dependent, homophilic cell adhesion molecule that regulates neural recognition during the development of the nervous system. Component of the repulsive Plexin signaling response to regulate motor axon guidance at the embryonic stage. Also component of a receptor complex that is required in the adult visual system to innervate the lamina layer; specific targeting of R1-R6 axons. In Drosophila sechellia (Fruit fly), this protein is Tyrosine-protein kinase-like otk.